A 142-amino-acid chain; its full sequence is Immunoglobulin iota chain (142 aa).

Positions 1-19 (MAWTSVLLMLLAYLTGCGP) are cleaved as a signal peptide. The interval 20-41 (QPMVHQPPLASSSLGATIRLSC) is framework-1. A disulfide bridge links C41 with C115. Residues 42–56 (TLSNDHNIGIYSIYW) are complementarity-determining-1. The interval 57-70 (YQQRPGHPPRFLLR) is framework-2. Residues 71–81 (YFSHSDKHQGP) form a complementarity-determining-2 region. The tract at residues 82 to 115 (DIPPRFSGSKDTTRNLGYLSISELQPEDEAVYYC) is framework-3.

Belongs to the immunoglobulin superfamily. In terms of assembly, interacts with IGLL1. Interacts with SYNV1/HRD1 (via N-terminus); this interaction leads to increased VPREB1A ubiquitination and degradation in pre-B cells, possibly through a lysosomal, not proteasomal, pathway. Only expressed by pre-B-cells.

Its subcellular location is the endoplasmic reticulum. Associates with the Ig-mu chain to form a molecular complex that is expressed on the surface of pre-B-cells. This complex presumably regulates Ig gene rearrangements in the early steps of B-cell differentiation. The chain is Immunoglobulin iota chain from Mus musculus (Mouse).